Consider the following 305-residue polypeptide: Glycine--tRNA ligase alpha subunit (305 aa).

It belongs to the class-II aminoacyl-tRNA synthetase family. In terms of assembly, tetramer of two alpha and two beta subunits.

The protein localises to the cytoplasm. It catalyses the reaction tRNA(Gly) + glycine + ATP = glycyl-tRNA(Gly) + AMP + diphosphate. The protein is Glycine--tRNA ligase alpha subunit of Streptococcus pyogenes serotype M49 (strain NZ131).